We begin with the raw amino-acid sequence, 94 residues long: Large ribosomal subunit protein bL25 (94 aa).

Positions 1–20 are disordered; that stretch reads MFKFNAEVRQSQGKGASRRL.

It belongs to the bacterial ribosomal protein bL25 family. In terms of assembly, part of the 50S ribosomal subunit; part of the 5S rRNA/L5/L18/L25 subcomplex. Contacts the 5S rRNA. Binds to the 5S rRNA independently of L5 and L18.

In terms of biological role, this is one of the proteins that binds to the 5S RNA in the ribosome where it forms part of the central protuberance. In Pasteurella multocida (strain Pm70), this protein is Large ribosomal subunit protein bL25.